The chain runs to 476 residues: Exodeoxyribonuclease 7 large subunit (476 aa).

The protein belongs to the XseA family. In terms of assembly, heterooligomer composed of large and small subunits.

The protein resides in the cytoplasm. The enzyme catalyses Exonucleolytic cleavage in either 5'- to 3'- or 3'- to 5'-direction to yield nucleoside 5'-phosphates.. Functionally, bidirectionally degrades single-stranded DNA into large acid-insoluble oligonucleotides, which are then degraded further into small acid-soluble oligonucleotides. The polypeptide is Exodeoxyribonuclease 7 large subunit (Bartonella tribocorum (strain CIP 105476 / IBS 506)).